A 33-amino-acid chain; its full sequence is Putative makorin-5 (33 aa).

The protein is Putative makorin-5 (MKRN9P) of Homo sapiens (Human).